A 230-amino-acid polypeptide reads, in one-letter code: 6-carboxyhexanoate--CoA ligase (230 aa).

It belongs to the BioW family. Homodimer. Requires Mg(2+) as cofactor.

It carries out the reaction heptanedioate + ATP + CoA = 6-carboxyhexanoyl-CoA + AMP + diphosphate. It participates in metabolic intermediate metabolism; pimeloyl-CoA biosynthesis; pimeloyl-CoA from pimelate: step 1/1. Catalyzes the transformation of pimelate into pimeloyl-CoA with concomitant hydrolysis of ATP to AMP. The chain is 6-carboxyhexanoate--CoA ligase from Staphylococcus aureus (strain MRSA252).